Reading from the N-terminus, the 248-residue chain is 1-(5-phosphoribosyl)-5-[(5-phosphoribosylamino)methylideneamino] imidazole-4-carboxamide isomerase (248 aa).

D7 acts as the Proton acceptor in catalysis. Residue D131 is the Proton donor of the active site.

It belongs to the HisA/HisF family.

It localises to the cytoplasm. The enzyme catalyses 1-(5-phospho-beta-D-ribosyl)-5-[(5-phospho-beta-D-ribosylamino)methylideneamino]imidazole-4-carboxamide = 5-[(5-phospho-1-deoxy-D-ribulos-1-ylimino)methylamino]-1-(5-phospho-beta-D-ribosyl)imidazole-4-carboxamide. Its pathway is amino-acid biosynthesis; L-histidine biosynthesis; L-histidine from 5-phospho-alpha-D-ribose 1-diphosphate: step 4/9. The polypeptide is 1-(5-phosphoribosyl)-5-[(5-phosphoribosylamino)methylideneamino] imidazole-4-carboxamide isomerase (Baumannia cicadellinicola subsp. Homalodisca coagulata).